A 224-amino-acid chain; its full sequence is Response regulator protein GraR (224 aa).

The Response regulatory domain occupies 2–115 (QILLVEDDNT…VLIAKLQAIY (114 aa)). 4-aspartylphosphate is present on aspartate 51. A DNA-binding region (ompR/PhoB-type) is located at residues 126–224 (KRTLTWQDAV…KVGKGYMAHE (99 aa)). A phosphothreonine mark is found at threonine 128, threonine 130, and threonine 149.

In terms of assembly, interacts with GraX. Phosphorylated by GraS. Phosphorylated by Stk1; phosphorylation increases the DNA-binding activity of GraR.

The protein localises to the cytoplasm. Member of the two-component regulatory system GraR/GraS involved in resistance against cationic antimicrobial peptides (CAMPs). Upon phosphorylation by GraS, functions as a transcription regulator by direct binding to promoter regions of target genes such as adhesins, exoproteins, transporters, toxins, and proteins involved in cell wall synthesis. Down-regulates the expression of many genes involved in RNA and amino acid synthesis or glycolysis. This Staphylococcus aureus (strain Mu3 / ATCC 700698) protein is Response regulator protein GraR (graR).